Reading from the N-terminus, the 941-residue chain is MutS protein homolog 1 (941 aa).

Residue 747–754 (GPNMAGKS) participates in ATP binding.

It belongs to the DNA mismatch repair MutS family.

It localises to the cytoplasm. Its subcellular location is the mitochondrion. Its function is as follows. Involved in mitochondrial DNA repair. The chain is MutS protein homolog 1 (msh1) from Schizosaccharomyces pombe (strain 972 / ATCC 24843) (Fission yeast).